Reading from the N-terminus, the 213-residue chain is Achelase-1 (213 aa).

A Peptidase S1 domain is found at 1 to 213 (IVGGSVTTIG…RYTSWIQSNA (213 aa)). A disulfide bond links C26 and C42. Active-site charge relay system residues include H41 and D86. A disulfide bridge links C155 with C172. The Charge relay system role is filled by S188.

The protein belongs to the peptidase S1 family. Hemolymph and saliva of the larval form (caterpillar).

The protein localises to the secreted. Its subcellular location is the extracellular space. Sensitive to serine proteinase inhibitors and thiol proteinase inhibitors. Functionally, fibrinolytic activity; shows preferential cleavage of Arg-Gly bonds in all three fibrinogen chains. Contact with the caterpillars causes severe bleeding, due the anticoagulant effect of the protein. The polypeptide is Achelase-1 (Lonomia achelous (Giant silkworm moth)).